The primary structure comprises 95 residues: Defensin (95 aa).

An N-terminal signal peptide occupies residues 1–17 (MKNYVFALLVVTAVAIA). Residues 18–55 (LPNEDKNAPMRVHLLPQKEDESLKLEVTPVKEHHRTRR) constitute a propeptide that is removed on maturation. Intrachain disulfides connect Cys-58/Cys-85, Cys-71/Cys-91, and Cys-75/Cys-93.

It belongs to the invertebrate defensin family. Type 1 subfamily.

It is found in the secreted. In terms of biological role, antibacterial peptide mostly active against Gram-positive bacteria. The protein is Defensin of Formica aquilonia (Red wood ant).